Reading from the N-terminus, the 143-residue chain is MLSFILIQNRQGKTRLAKWYVPYSDEEKIKLKGEIHRLVAPRDQKYQSNFVEFRNHKVVYRRYAGLFFCACVDTNDNELAYLEAIHFFVEVLDSFFGNVCELDLVFNFYKVYAILDEVFLAGEIEETSKQVVLTRLEHLDKLE.

It belongs to the adaptor complexes small subunit family. As to quaternary structure, adaptor protein complex 2 (AP-2) is a heterotetramer composed of two large adaptins (alpha-type subunit APL3 and beta-type subunit APL1), a medium chain (mu-type subunit APM4) and a small adaptin (sigma-type subunit APS2).

The protein resides in the cell membrane. It is found in the membrane. It localises to the coated pit. Component of the adaptor complexes which link clathrin to receptors in coated vesicles. Clathrin-associated protein complexes are believed to interact with the cytoplasmic tails of membrane proteins, leading to their selection and concentration. The chain is AP-2 complex subunit sigma (aps-2) from Neurospora crassa (strain ATCC 24698 / 74-OR23-1A / CBS 708.71 / DSM 1257 / FGSC 987).